A 161-amino-acid chain; its full sequence is GTP-dependent dephospho-CoA kinase (161 aa).

GTP contacts are provided by D40, V41, V42, D59, and E112.

This sequence belongs to the GTP-dependent DPCK family.

It carries out the reaction 3'-dephospho-CoA + GTP = GDP + CoA + H(+). It participates in cofactor biosynthesis; coenzyme A biosynthesis. In terms of biological role, catalyzes the GTP-dependent phosphorylation of the 3'-hydroxyl group of dephosphocoenzyme A to form coenzyme A (CoA). The sequence is that of GTP-dependent dephospho-CoA kinase from Methanoculleus marisnigri (strain ATCC 35101 / DSM 1498 / JR1).